The sequence spans 295 residues: NAD kinase (295 aa).

The active-site Proton acceptor is D72. NAD(+) contacts are provided by residues 72–73 (DG), 146–147 (ND), R157, K174, D176, 187–192 (TAYALS), and Q247.

This sequence belongs to the NAD kinase family. It depends on a divalent metal cation as a cofactor.

The protein resides in the cytoplasm. The catalysed reaction is NAD(+) + ATP = ADP + NADP(+) + H(+). Functionally, involved in the regulation of the intracellular balance of NAD and NADP, and is a key enzyme in the biosynthesis of NADP. Catalyzes specifically the phosphorylation on 2'-hydroxyl of the adenosine moiety of NAD to yield NADP. The protein is NAD kinase of Pseudomonas aeruginosa (strain LESB58).